Here is a 109-residue protein sequence, read N- to C-terminus: Large ribosomal subunit protein uL24 (109 aa).

Belongs to the universal ribosomal protein uL24 family. In terms of assembly, part of the 50S ribosomal subunit.

Functionally, one of two assembly initiator proteins, it binds directly to the 5'-end of the 23S rRNA, where it nucleates assembly of the 50S subunit. Its function is as follows. One of the proteins that surrounds the polypeptide exit tunnel on the outside of the subunit. This chain is Large ribosomal subunit protein uL24, found in Mesoplasma florum (strain ATCC 33453 / NBRC 100688 / NCTC 11704 / L1) (Acholeplasma florum).